The following is a 323-amino-acid chain: RNA polymerase sigma factor SigB (323 aa).

Residues 1–228 are sufficient to interact with RbpA; the sequence is MADAPTRATT…DMPVGSEEEA (228 aa). Residues 25-59 are sigma-70 factor domain-1; the sequence is DLVRVYLNGIGKTALLNAAGEVELAKRIEAGLYAE. The sigma-70 factor domain-2 stretch occupies residues 90–160; that stretch reads LLEANLRLVV…TRGMADQSRT (71 aa). The Polymerase core binding signature appears at 114 to 117; the sequence is DLIQ. Positions 169–245 are sigma-70 factor domain-3; that stretch reads EQVNKLARIK…DAEAMSAENA (77 aa). A sigma-70 factor domain-4 region spans residues 258–311; the sequence is VLATLDEREHQVIRLRFGLDDGQPRTLDQIGKLFGLSRERVRQIERDVMSKLRH. The H-T-H motif DNA-binding region spans 284–303; sequence LDQIGKLFGLSRERVRQIER.

Belongs to the sigma-70 factor family. In terms of assembly, monomer. Interacts transiently with the RNA polymerase catalytic core formed by RpoA, RpoB, RpoC and RpoZ (2 alpha, 1 beta, 1 beta' and 1 omega subunit) to form the RNA polymerase holoenzyme that can initiate transcription.

In terms of biological role, sigma factors are initiation factors that promote the attachment of RNA polymerase to specific initiation sites and are then released. A non-essential principal sigma factor that responds to cell envelope stress and hypoxia. The polypeptide is RNA polymerase sigma factor SigB (sigB) (Mycobacterium tuberculosis (strain CDC 1551 / Oshkosh)).